The following is a 283-amino-acid chain: Thymidylate synthase (283 aa).

Residues arginine 31 and 145-146 each bind dUMP; that span reads RR. The active-site Nucleophile is the cysteine 165. Residues 185–188, asparagine 196, and 226–228 contribute to the dUMP site; these read RSAD and HIY. Aspartate 188 serves as a coordination point for (6R)-5,10-methylene-5,6,7,8-tetrahydrofolate. A (6R)-5,10-methylene-5,6,7,8-tetrahydrofolate-binding site is contributed by serine 282.

It belongs to the thymidylate synthase family. Bacterial-type ThyA subfamily. Homodimer.

The protein localises to the cytoplasm. The catalysed reaction is dUMP + (6R)-5,10-methylene-5,6,7,8-tetrahydrofolate = 7,8-dihydrofolate + dTMP. It participates in pyrimidine metabolism; dTTP biosynthesis. Catalyzes the reductive methylation of 2'-deoxyuridine-5'-monophosphate (dUMP) to 2'-deoxythymidine-5'-monophosphate (dTMP) while utilizing 5,10-methylenetetrahydrofolate (mTHF) as the methyl donor and reductant in the reaction, yielding dihydrofolate (DHF) as a by-product. This enzymatic reaction provides an intracellular de novo source of dTMP, an essential precursor for DNA biosynthesis. This chain is Thymidylate synthase, found in Symbiobacterium thermophilum (strain DSM 24528 / JCM 14929 / IAM 14863 / T).